The primary structure comprises 112 residues: UPF0212 protein Mhun_0078 (112 aa).

The protein belongs to the UPF0212 family.

The chain is UPF0212 protein Mhun_0078 from Methanospirillum hungatei JF-1 (strain ATCC 27890 / DSM 864 / NBRC 100397 / JF-1).